Reading from the N-terminus, the 362-residue chain is Leucoanthocyanidin dioxygenase (362 aa).

The disordered stretch occupies residues 1–23 (MVTSAMGPSPRVEELARSGLDTI). Positions 214 to 313 (LIVQMKINFY…RISWAVFCEP (100 aa)) constitute a Fe2OG dioxygenase domain. His238, Asp240, and His294 together coordinate Fe cation. Arg304 is an active-site residue.

This sequence belongs to the iron/ascorbate-dependent oxidoreductase family. Requires Fe cation as cofactor. It depends on L-ascorbate as a cofactor. As to expression, expressed in red but not in green forma of P.frutescens. In red forma, it is predominantly expressed in stems and leaves, but not in roots.

The catalysed reaction is a (2R,3S,4S)-leucoanthocyanidin + 2-oxoglutarate + O2 = a 4-H-anthocyanidin with a 3-hydroxy group + succinate + CO2 + 2 H2O. Its pathway is pigment biosynthesis; anthocyanin biosynthesis. In terms of biological role, oxidation of leucoanthocyanidins into anthocyanidins. The protein is Leucoanthocyanidin dioxygenase (ANS) of Perilla frutescens (Beefsteak mint).